The sequence spans 356 residues: Guanine nucleotide-binding protein alpha-2 subunit (356 aa).

Gly-2 carries N-myristoyl glycine lipidation. A lipid anchor (S-palmitoyl cysteine) is attached at Cys-4. In terms of domain architecture, G-alpha spans 35–356; the sequence is REVKLLLLGA…LTNNLRDIVL (322 aa). The tract at residues 38-51 is G1 motif; it reads KLLLLGAGESGKST. Residues Glu-46, Ser-47, Gly-48, Lys-49, Ser-50, Thr-51, Asp-153, Leu-178, Thr-184, Gly-206, Asn-272, Lys-273, Asp-275, and Ala-329 each coordinate GTP. Ser-50 lines the Mg(2+) pocket. The tract at residues 176 to 184 is G2 motif; the sequence is DILRCRNKT. Thr-184 is a Mg(2+) binding site. Residues 199–208 are G3 motif; that stretch reads YRIFDVGGQR. The segment at 268–275 is G4 motif; it reads ILFLNKVD. Residues 327–332 are G5 motif; it reads TNATDV.

It belongs to the G-alpha family. In terms of assembly, g proteins are composed of 3 units; alpha, beta and gamma. The alpha chain contains the guanine nucleotide binding site. Mg(2+) is required as a cofactor.

Functionally, guanine nucleotide-binding proteins (G proteins) are involved as modulators or transducers in various transmembrane signaling systems. The protein is Guanine nucleotide-binding protein alpha-2 subunit (GPA2) of Mycosarcoma maydis (Corn smut fungus).